The primary structure comprises 950 residues: Nonsense-mediated mRNA decay factor SMG8 (950 aa).

2 disordered regions span residues 560–607 (HTGK…LSPT) and 624–651 (NESQ…ADTE). Over residues 568-582 (QDEDGEEDAEDEEGQ) the composition is skewed to acidic residues. The segment covering 593 to 607 (QNTASNGCSQPLSPT) has biased composition (polar residues). Residues 624 to 648 (NESQASSEQLSNSEQNSTSSGTSSA) are compositionally biased toward low complexity.

The protein belongs to the SMG8 family.

Its function is as follows. Involved in nonsense-mediated decay (NMD) of mRNAs containing premature stop codons. Probable component of kinase complex containing nonC and recruited to stalled ribosomes. This Drosophila yakuba (Fruit fly) protein is Nonsense-mediated mRNA decay factor SMG8.